A 383-amino-acid polypeptide reads, in one-letter code: MSPEIALNRISPMLSPFISSVVRNGKVGLDATNCLRITDLKSGCTSLTPGPNCDRFKLHIPYAGETLKWDIIFNAQYPELPPDFIFGEDAEFLPDPSALHNLASWNPSNPECLLLVVKELVQQYHQFQCGRLRESSRLMFEYQTLLEEPQYGENMEIYAGKKNNWTGEFSARFLLKLPVDFSNIPTYLLKDVNEDPGEDVALLSVSFEDTEATQVYPKLYLSPRIEHALGGSSALHIPAFPGGGCLIDYVPQVCHLLTNKVQYVIQGYHKRREYIAAFLSHFGTGVVEYDAEGFTKLTLLLMWKDFCFLVHIDLPLFFPRDQPTLTFQSVYHFTNSGQLYSQAQKNYPYSPRWDGNEMAKRAKAYFKTFVPQFQEAAFANGKL.

Met-1 bears the N-acetylmethionine mark. Ser-2 bears the Phosphoserine mark. 2 UEV-like regions span residues 30–147 (DATN…TLLE) and 275–364 (IAAF…RAKA).

It belongs to the BABAM2 family. Component of the ARISC complex, at least composed of UIMC1/RAP80, ABRAXAS1, BRCC3/BRCC36, BABAM2 and BABAM1/NBA1. Component of the BRCA1-A complex, at least composed of BRCA1, BARD1, UIMC1/RAP80, ABRAXAS1, BRCC3/BRCC36, BABAM2 and BABAM1/NBA1. In the BRCA1-A complex, interacts directly with ABRAXAS1, BRCC3/BRCC36 and BABAM1/NBA1. Binds polyubiquitin. Component of the BRISC complex, at least composed of ABRAXAS2, BRCC3/BRCC36, BABAM2 and BABAM1/NBA1. Identified in a complex with SHMT2 and the other subunits of the BRISC complex. Component of the BRCA1/BRCA2 containing complex (BRCC), which also contains BRCA1, BRCA2, BARD1, BRCC3/BRCC36 and RAD51. BRCC is a ubiquitin E3 ligase complex that enhances cellular survival following DNA damage. May interact with FAS and TNFRSF1A. In terms of tissue distribution, expressed in brain, heart, kidney, liver, lung, testis, germinal center B-cells and various mouse cell lines.

It localises to the cytoplasm. Its subcellular location is the nucleus. Functionally, component of the BRCA1-A complex, a complex that specifically recognizes 'Lys-63'-linked ubiquitinated histones H2A and H2AX at DNA lesions sites, leading to target the BRCA1-BARD1 heterodimer to sites of DNA damage at double-strand breaks (DSBs). The BRCA1-A complex also possesses deubiquitinase activity that specifically removes 'Lys-63'-linked ubiquitin on histones H2A and H2AX. In the BRCA1-A complex, it acts as an adapter that bridges the interaction between BABAM1/NBA1 and the rest of the complex, thereby being required for the complex integrity and modulating the E3 ubiquitin ligase activity of the BRCA1-BARD1 heterodimer. Probably also plays a role as a component of the BRISC complex, a multiprotein complex that specifically cleaves 'Lys-63'-linked ubiquitin. May regulate TNF-alpha signaling through its interactions with TNFRSF1A. In terms of biological role, component of the BRCA1-A complex, a complex that specifically recognizes 'Lys-63'-linked ubiquitinated histones H2A and H2AX at DNA lesions sites, leading to target the BRCA1-BARD1 heterodimer to sites of DNA damage at double-strand breaks (DSBs). The BRCA1-A complex also possesses deubiquitinase activity that specifically removes 'Lys-63'-linked ubiquitin on histones H2A and H2AX. In the BRCA1-A complex, it acts as an adapter that bridges the interaction between BABAM1/NBA1 and the rest of the complex, thereby being required for the complex integrity and modulating the E3 ubiquitin ligase activity of the BRCA1-BARD1 heterodimer. Component of the BRISC complex, a multiprotein complex that specifically cleaves 'Lys-63'-linked ubiquitin in various substrates. Within the BRISC complex, acts as an adapter that bridges the interaction between BABAM1/NBA1 and the rest of the complex, thereby being required for the complex integrity. The BRISC complex is required for normal mitotic spindle assembly and microtubule attachment to kinetochores via its role in deubiquitinating NUMA1. The BRISC complex plays a role in interferon signaling via its role in the deubiquitination of the interferon receptor IFNAR1; deubiquitination increases IFNAR1 activity by enhancing its stability and cell surface expression. Down-regulates the response to bacterial lipopolysaccharide (LPS) via its role in IFNAR1 deubiquitination. May play a role in homeostasis or cellular differentiation in cells of neural, epithelial and germline origins. May also act as a death receptor-associated anti-apoptotic protein, which inhibits the mitochondrial apoptotic pathway. May regulate TNF-alpha signaling through its interactions with TNFRSF1A; however these effects may be indirect. The protein is BRISC and BRCA1-A complex member 2 (Babam2) of Mus musculus (Mouse).